Reading from the N-terminus, the 314-residue chain is Olfactory receptor 5P51 (314 aa).

Over 1-28 (MAFLEDGNHTAVTEFVLFGLTDDPVLRV) the chain is Extracellular. N8 carries N-linked (GlcNAc...) asparagine glycosylation. A helical transmembrane segment spans residues 29-49 (ILFIIFLCIYLVNVSGNLSTI). Topologically, residues 50–57 (LLIRVSSQ) are cytoplasmic. The chain crosses the membrane as a helical span at residues 58 to 78 (LHHPMYFFLSHLASVDVGYSS). Residues 79-102 (TVTPKMLANFLLERSTISYLGCTI) are Extracellular-facing. C100 and C192 are joined by a disulfide. Residues 103-123 (QLFSGAFVGTLECFLLATMAY) traverse the membrane as a helical segment. Over 124 to 136 (DRFIAICNPLLYS) the chain is Cytoplasmic. A helical membrane pass occupies residues 137–157 (TKMSTQVCIQLLVGSYIGGFL). Topologically, residues 158–199 (NASSFLLSFFPLLFCGPNRVNHYSCDLTPLIELSCSGSNVPI) are extracellular. The helical transmembrane segment at 200-220 (VPASFCSAFVIIVTVSVIAIS) threads the bilayer. The Cytoplasmic portion of the chain corresponds to 221–240 (YTYILITILKMRSTEGRQKA). A helical transmembrane segment spans residues 241 to 261 (FSTCTSHLTAVTLYYGTVTFI). Topologically, residues 262 to 274 (YVMPKSSYSTDQN) are extracellular. Residues 275-295 (KVVSVFYTVVIPMLNPIIYSL) form a helical membrane-spanning segment. Topologically, residues 296 to 314 (RNNEIKGALKRQLARKIFS) are cytoplasmic.

This sequence belongs to the G-protein coupled receptor 1 family.

It localises to the cell membrane. Functionally, potential odorant receptor. This Mus musculus (Mouse) protein is Olfactory receptor 5P51.